The following is a 1405-amino-acid chain: DNA-directed RNA polymerase III subunit rpc1 (1405 aa).

7 residues coordinate Zn(2+): Cys66, Cys69, Cys76, His79, Cys106, Cys109, and Cys153. Mg(2+) contacts are provided by Asp493, Asp495, and Asp497. Residues 838 to 850 (PTEFLFHAISGRE) are bridging helix.

It belongs to the RNA polymerase beta' chain family. In terms of assembly, component of the RNA polymerase III (Pol III) complex consisting of 17 subunits.

It is found in the nucleus. The catalysed reaction is RNA(n) + a ribonucleoside 5'-triphosphate = RNA(n+1) + diphosphate. In terms of biological role, DNA-dependent RNA polymerase catalyzes the transcription of DNA into RNA using the four ribonucleoside triphosphates as substrates. Largest and catalytic core component of RNA polymerase III which synthesizes small RNAs, such as 5S rRNA and tRNAs. Forms the polymerase active center together with the second largest subunit. A single-stranded DNA template strand of the promoter is positioned within the central active site cleft of Pol III. A bridging helix emanates from RPC1 and crosses the cleft near the catalytic site and is thought to promote translocation of Pol III by acting as a ratchet that moves the RNA-DNA hybrid through the active site by switching from straight to bent conformations at each step of nucleotide addition. This Schizosaccharomyces pombe (strain 972 / ATCC 24843) (Fission yeast) protein is DNA-directed RNA polymerase III subunit rpc1 (rpc1).